A 172-amino-acid chain; its full sequence is Transcriptional repressor NrdR (172 aa).

A zinc finger lies at 3–34 (CPYCRNTDTRVLDSRVADDGGSIRRRRTCSAC). The ATP-cone domain maps to 46–136 (LTVLKRSGAS…VYRAFESADD (91 aa)).

This sequence belongs to the NrdR family. Zn(2+) is required as a cofactor.

Its function is as follows. Negatively regulates transcription of bacterial ribonucleotide reductase nrd genes and operons by binding to NrdR-boxes. The polypeptide is Transcriptional repressor NrdR (Nocardioides sp. (strain ATCC BAA-499 / JS614)).